Reading from the N-terminus, the 429-residue chain is 3-phosphoshikimate 1-carboxyvinyltransferase (429 aa).

Lys11, Ser12, and Arg16 together coordinate 3-phosphoshikimate. Position 11 (Lys11) interacts with phosphoenolpyruvate. 2 residues coordinate phosphoenolpyruvate: Gly82 and Arg110. Residues Ser155, Gln157, Asp302, and Lys329 each coordinate 3-phosphoshikimate. Gln157 is a binding site for phosphoenolpyruvate. The active-site Proton acceptor is Asp302. 2 residues coordinate phosphoenolpyruvate: Arg333 and Arg385.

Belongs to the EPSP synthase family. Monomer.

It is found in the cytoplasm. It catalyses the reaction 3-phosphoshikimate + phosphoenolpyruvate = 5-O-(1-carboxyvinyl)-3-phosphoshikimate + phosphate. It participates in metabolic intermediate biosynthesis; chorismate biosynthesis; chorismate from D-erythrose 4-phosphate and phosphoenolpyruvate: step 6/7. Functionally, catalyzes the transfer of the enolpyruvyl moiety of phosphoenolpyruvate (PEP) to the 5-hydroxyl of shikimate-3-phosphate (S3P) to produce enolpyruvyl shikimate-3-phosphate and inorganic phosphate. This is 3-phosphoshikimate 1-carboxyvinyltransferase from Helicobacter pylori (strain G27).